Reading from the N-terminus, the 80-residue chain is Small ribosomal subunit protein bS18c (80 aa).

Positions 1–19 (MKKFISRPKRSSRRRKKTP) are enriched in basic residues. The disordered stretch occupies residues 1–24 (MKKFISRPKRSSRRRKKTPIKPGE).

It belongs to the bacterial ribosomal protein bS18 family. As to quaternary structure, part of the 30S ribosomal subunit.

The protein localises to the plastid. It is found in the chloroplast. In Staurastrum punctulatum (Green alga), this protein is Small ribosomal subunit protein bS18c.